The sequence spans 129 residues: uncharacterized protein (129 aa).

Positions 1 to 27 are cleaved as a signal peptide; it reads MLMRKKKLLSRISFGSLFLLCGTILSA. Residue C28 is the site of N-palmitoyl cysteine attachment. C28 carries the S-diacylglycerol cysteine lipid modification.

The protein belongs to the MG439/MG440 family.

The protein localises to the cell membrane. This is an uncharacterized protein from Mycoplasma pneumoniae (strain ATCC 29342 / M129 / Subtype 1) (Mycoplasmoides pneumoniae).